The primary structure comprises 212 residues: Uridine kinase (212 aa).

ATP is bound at residue 13 to 20 (GASASGKS).

This sequence belongs to the uridine kinase family.

Its subcellular location is the cytoplasm. The catalysed reaction is uridine + ATP = UMP + ADP + H(+). It carries out the reaction cytidine + ATP = CMP + ADP + H(+). It functions in the pathway pyrimidine metabolism; CTP biosynthesis via salvage pathway; CTP from cytidine: step 1/3. The protein operates within pyrimidine metabolism; UMP biosynthesis via salvage pathway; UMP from uridine: step 1/1. The polypeptide is Uridine kinase (Psychromonas ingrahamii (strain DSM 17664 / CCUG 51855 / 37)).